Here is a 517-residue protein sequence, read N- to C-terminus: Acetyl-coenzyme A carboxylase carboxyl transferase subunit beta, chloroplastic (517 aa).

Basic and acidic residues-rich tracts occupy residues 1–17 (MKPT…KSNE), 24–41 (GDNK…KSNE), 48–65 (GDNK…KSNE), and 72–81 (GDKQKDKKDG). Disordered stretches follow at residues 1–179 (MKPT…KEEE) and 204–234 (KHRD…DSEA). Acidic residues predominate over residues 87–131 (YDDEYEEDLEYDDEYEEDLEYDDEYEEDLEYDDEEYDDEYEEDLE). 2 stretches are compositionally biased toward basic and acidic residues: residues 132 to 179 (GDNK…KEEE) and 209 to 229 (KSVP…RDTD). The CoA carboxyltransferase N-terminal domain occupies 243–514 (LWVHCKLCSG…NSQVINIYNY (272 aa)). The Zn(2+) site is built by cysteine 247, cysteine 250, cysteine 266, and cysteine 269. A C4-type zinc finger spans residues 247-269 (CKLCSGFNYKKILKSKNNVCEQC).

This sequence belongs to the AccD/PCCB family. In terms of assembly, acetyl-CoA carboxylase is a heterohexamer composed of biotin carboxyl carrier protein, biotin carboxylase and 2 subunits each of ACCase subunit alpha and ACCase plastid-coded subunit beta (accD). Requires Zn(2+) as cofactor.

Its subcellular location is the plastid. The protein localises to the chloroplast stroma. It catalyses the reaction N(6)-carboxybiotinyl-L-lysyl-[protein] + acetyl-CoA = N(6)-biotinyl-L-lysyl-[protein] + malonyl-CoA. The protein operates within lipid metabolism; malonyl-CoA biosynthesis; malonyl-CoA from acetyl-CoA: step 1/1. In terms of biological role, component of the acetyl coenzyme A carboxylase (ACC) complex. Biotin carboxylase (BC) catalyzes the carboxylation of biotin on its carrier protein (BCCP) and then the CO(2) group is transferred by the transcarboxylase to acetyl-CoA to form malonyl-CoA. This is Acetyl-coenzyme A carboxylase carboxyl transferase subunit beta, chloroplastic from Oenothera elata subsp. hookeri (Hooker's evening primrose).